Consider the following 261-residue polypeptide: MSSGAVLTSQEYITHHLSNLKVGEGFWAVHLDSLGWSVFLGLVFLTIFRSVAKKATSGVPGKLQCAVEMVVGFVDDSVKSTFHGKNALIAPLSLTIFVWILLMNSMDWVPVDLLPHLIHWVTGMPLGDIYMKPVPTADPNITFGLALGVFILIIYYSIKVKGVGGFMKELTTQPFGHWSLYPVNFILETVTMLARPLSLALRLFGNLYAGELIFLLIATIGVFQLPVHFLWAAFHLLVIPLQAFIFMMLTIVYLSLAHEDH.

The next 5 helical transmembrane spans lie at 28–48 (AVHL…LTIF), 89–109 (IAPL…MDWV), 140–160 (NITF…SIKV), 203–223 (LFGN…IGVF), and 229–249 (FLWA…FMML).

It belongs to the ATPase A chain family. F-type ATPases have 2 components, CF(1) - the catalytic core - and CF(0) - the membrane proton channel. CF(1) has five subunits: alpha(3), beta(3), gamma(1), delta(1), epsilon(1). CF(0) has three main subunits: a(1), b(2) and c(9-12). The alpha and beta chains form an alternating ring which encloses part of the gamma chain. CF(1) is attached to CF(0) by a central stalk formed by the gamma and epsilon chains, while a peripheral stalk is formed by the delta and b chains.

It localises to the cell inner membrane. Its function is as follows. Key component of the proton channel; it plays a direct role in the translocation of protons across the membrane. This chain is ATP synthase subunit a, found in Colwellia psychrerythraea (strain 34H / ATCC BAA-681) (Vibrio psychroerythus).